The sequence spans 229 residues: Aminodeoxyfutalosine nucleosidase (229 aa).

Residue Glu-13 is the Proton acceptor of the active site. Substrate-binding positions include Gly-79, Ile-153, and 173–174 (ME). Asp-197 (proton donor) is an active-site residue.

This sequence belongs to the PNP/UDP phosphorylase family. Homodimer.

The catalysed reaction is 6-amino-6-deoxyfutalosine + H2O = dehypoxanthine futalosine + adenine. The enzyme catalyses S-adenosyl-L-homocysteine + H2O = S-(5-deoxy-D-ribos-5-yl)-L-homocysteine + adenine. It carries out the reaction S-methyl-5'-thioadenosine + H2O = 5-(methylsulfanyl)-D-ribose + adenine. It catalyses the reaction 5'-deoxyadenosine + H2O = 5-deoxy-D-ribose + adenine. It functions in the pathway quinol/quinone metabolism; menaquinone biosynthesis. It participates in amino-acid biosynthesis; L-methionine biosynthesis via salvage pathway; S-methyl-5-thio-alpha-D-ribose 1-phosphate from S-methyl-5'-thioadenosine (hydrolase route): step 1/2. Catalyzes the direct conversion of aminodeoxyfutalosine (AFL) into dehypoxanthine futalosine (DHFL) and adenine via the hydrolysis of the N-glycosidic bond; this reaction seems to represent an essential step in the menaquinone biosynthesis pathway in Campylobacter species. Also catalyzes the hydrolysis of 5'-methylthioadenosine (MTA) to adenine and 5'-methylthioribose. Can also probably use S-adenosylhomocysteine (SAH) as substrate, leading to adenine and S-ribosylhomocysteine. These other activities highlight the tremendous versatility of the enzyme, which also plays key roles in S-adenosylmethionine recycling and in the biosynthesis of the quorum-sensing molecule autoinducer-2. Shows negligible activity with futalosine (FL) as substrate. This Campylobacter jejuni subsp. jejuni serotype O:2 (strain ATCC 700819 / NCTC 11168) protein is Aminodeoxyfutalosine nucleosidase (pfs).